The primary structure comprises 114 residues: Nucleoid-associated protein Clos_2855 (114 aa).

Belongs to the YbaB/EbfC family. In terms of assembly, homodimer.

It is found in the cytoplasm. Its subcellular location is the nucleoid. Binds to DNA and alters its conformation. May be involved in regulation of gene expression, nucleoid organization and DNA protection. The protein is Nucleoid-associated protein Clos_2855 of Alkaliphilus oremlandii (strain OhILAs) (Clostridium oremlandii (strain OhILAs)).